We begin with the raw amino-acid sequence, 641 residues long: 1-deoxy-D-xylulose-5-phosphate synthase (641 aa).

Thiamine diphosphate contacts are provided by residues histidine 80 and 121 to 123 (GHS). Aspartate 152 lines the Mg(2+) pocket. Residues 153–154 (GS), asparagine 181, tyrosine 290, and glutamate 372 each bind thiamine diphosphate. Asparagine 181 is a Mg(2+) binding site.

The protein belongs to the transketolase family. DXPS subfamily. In terms of assembly, homodimer. It depends on Mg(2+) as a cofactor. The cofactor is thiamine diphosphate.

It catalyses the reaction D-glyceraldehyde 3-phosphate + pyruvate + H(+) = 1-deoxy-D-xylulose 5-phosphate + CO2. Its pathway is metabolic intermediate biosynthesis; 1-deoxy-D-xylulose 5-phosphate biosynthesis; 1-deoxy-D-xylulose 5-phosphate from D-glyceraldehyde 3-phosphate and pyruvate: step 1/1. Its function is as follows. Catalyzes the acyloin condensation reaction between C atoms 2 and 3 of pyruvate and glyceraldehyde 3-phosphate to yield 1-deoxy-D-xylulose-5-phosphate (DXP). The chain is 1-deoxy-D-xylulose-5-phosphate synthase from Rhodobacter capsulatus (Rhodopseudomonas capsulata).